Consider the following 99-residue polypeptide: Malonate decarboxylase acyl carrier protein (99 aa).

Serine 25 is modified (O-(phosphoribosyl dephospho-coenzyme A)serine).

This sequence belongs to the MdcC family. In terms of processing, covalently binds the prosthetic group of malonate decarboxylase.

It is found in the cytoplasm. Functionally, subunit of malonate decarboxylase, it is an acyl carrier protein to which acetyl and malonyl thioester residues are bound via a 2'-(5''-phosphoribosyl)-3'-dephospho-CoA prosthetic group and turn over during the catalytic mechanism. The polypeptide is Malonate decarboxylase acyl carrier protein (Pseudomonas putida (strain W619)).